A 360-amino-acid chain; its full sequence is S-adenosylmethionine:tRNA ribosyltransferase-isomerase (360 aa).

The protein belongs to the QueA family. As to quaternary structure, monomer.

Its subcellular location is the cytoplasm. It carries out the reaction 7-aminomethyl-7-carbaguanosine(34) in tRNA + S-adenosyl-L-methionine = epoxyqueuosine(34) in tRNA + adenine + L-methionine + 2 H(+). It functions in the pathway tRNA modification; tRNA-queuosine biosynthesis. Its function is as follows. Transfers and isomerizes the ribose moiety from AdoMet to the 7-aminomethyl group of 7-deazaguanine (preQ1-tRNA) to give epoxyqueuosine (oQ-tRNA). This chain is S-adenosylmethionine:tRNA ribosyltransferase-isomerase, found in Rhodopseudomonas palustris (strain BisB5).